The primary structure comprises 55 residues: NPDCLLPIKTGPCKGSFPRYAYDSSEDKCVEFIYGGCQANANNFETIEECEAACL.

Residues 4-54 form the BPTI/Kunitz inhibitor domain; sequence CLLPIKTGPCKGSFPRYAYDSSEDKCVEFIYGGCQANANNFETIEECEAAC. Cystine bridges form between Cys-4–Cys-54, Cys-13–Cys-37, and Cys-29–Cys-50.

In terms of assembly, monomer. Expressed exclusively in the middle silk gland.

Functionally, this cocoon shell-associated protein inhibits trypsin Activity by forming a low-dissociation complex with trypsin. May play an important part in regulating proteolytic activity in the silk gland or protecting silk proteins from degradation during histolysis. The protein is Trypsin inhibitor of Bombyx mori (Silk moth).